The primary structure comprises 76 residues: UPF0291 protein GWCH70_1239 (76 aa).

Positions 54–76 (VIDPNGNDVTPKKLKESQKSRLH) are disordered. A compositionally biased stretch (basic and acidic residues) spans 63-76 (TPKKLKESQKSRLH).

This sequence belongs to the UPF0291 family.

It localises to the cytoplasm. The polypeptide is UPF0291 protein GWCH70_1239 (Geobacillus sp. (strain WCH70)).